Reading from the N-terminus, the 240-residue chain is Purine nucleoside phosphorylase DeoD-type (240 aa).

Residue His-5 participates in a purine D-ribonucleoside binding. Residues Gly-21, Arg-25, Arg-44, and 88-91 each bind phosphate; that span reads RVGS. A purine D-ribonucleoside is bound by residues 181–183 and 205–206; these read EME and SD. The Proton donor role is filled by Asp-206.

This sequence belongs to the PNP/UDP phosphorylase family. In terms of assembly, homohexamer; trimer of homodimers.

The enzyme catalyses a purine D-ribonucleoside + phosphate = a purine nucleobase + alpha-D-ribose 1-phosphate. It catalyses the reaction a purine 2'-deoxy-D-ribonucleoside + phosphate = a purine nucleobase + 2-deoxy-alpha-D-ribose 1-phosphate. Its function is as follows. Catalyzes the reversible phosphorolytic breakdown of the N-glycosidic bond in the beta-(deoxy)ribonucleoside molecules, with the formation of the corresponding free purine bases and pentose-1-phosphate. This is Purine nucleoside phosphorylase DeoD-type from Enterobacter sp. (strain 638).